We begin with the raw amino-acid sequence, 48 residues long: Large ribosomal subunit protein bL33A (48 aa).

This sequence belongs to the bacterial ribosomal protein bL33 family.

This is Large ribosomal subunit protein bL33A from Streptococcus pyogenes serotype M28 (strain MGAS6180).